We begin with the raw amino-acid sequence, 277 residues long: Large ribosomal subunit protein uL2 (277 aa).

Positions 219–277 are disordered; it reads RPQTRGSAMNPVDHPHGGGEGKKNSGRHPVTPWGKPTKGAKTRRKKASDKLIISRRKGK. A compositionally biased stretch (basic and acidic residues) spans 231 to 241; it reads DHPHGGGEGKK. A compositionally biased stretch (basic residues) spans 256-277; the sequence is KGAKTRRKKASDKLIISRRKGK.

Belongs to the universal ribosomal protein uL2 family. Part of the 50S ribosomal subunit. Forms a bridge to the 30S subunit in the 70S ribosome.

In terms of biological role, one of the primary rRNA binding proteins. Required for association of the 30S and 50S subunits to form the 70S ribosome, for tRNA binding and peptide bond formation. It has been suggested to have peptidyltransferase activity; this is somewhat controversial. Makes several contacts with the 16S rRNA in the 70S ribosome. This Campylobacter curvus (strain 525.92) protein is Large ribosomal subunit protein uL2.